A 150-amino-acid chain; its full sequence is uncharacterized protein (150 aa).

The signal sequence occupies residues 1-28; sequence MPLDVWIAFSYFIDFFQWLFMLNAEVMR.

This is an uncharacterized protein from Archaeoglobus fulgidus (strain ATCC 49558 / DSM 4304 / JCM 9628 / NBRC 100126 / VC-16).